A 632-amino-acid chain; its full sequence is Bifunctional protein GlmU (632 aa).

Residues 1 to 229 (MAERELSVAI…PQEIVGVNDR (229 aa)) form a pyrophosphorylase region. UDP-N-acetyl-alpha-D-glucosamine contacts are provided by residues 11-14 (LAAG), K25, Q76, and 81-82 (GT). A Mg(2+)-binding site is contributed by D106. G143, E158, N173, and N227 together coordinate UDP-N-acetyl-alpha-D-glucosamine. A Mg(2+)-binding site is contributed by N227. Residues 230-250 (RQLAQAYQILQDRLKEAWMEA) form a linker region. The segment at 251–632 (GVTFVDPDSS…ADNSRPKSLQ (382 aa)) is N-acetyltransferase. The UDP-N-acetyl-alpha-D-glucosamine site is built by R332 and K350. The Proton acceptor role is filled by H362. UDP-N-acetyl-alpha-D-glucosamine contacts are provided by Y365 and N376. Residues A379, 385–386 (NY), A422, and R441 contribute to the acetyl-CoA site. The segment at 600 to 632 (VAGDPCWPSPPPQPQQNQQTKPEADNSRPKSLQ) is disordered. Residues 621–632 (PEADNSRPKSLQ) show a composition bias toward basic and acidic residues.

In the N-terminal section; belongs to the N-acetylglucosamine-1-phosphate uridyltransferase family. It in the C-terminal section; belongs to the transferase hexapeptide repeat family. As to quaternary structure, homotrimer. Requires Mg(2+) as cofactor.

The protein localises to the cytoplasm. The catalysed reaction is alpha-D-glucosamine 1-phosphate + acetyl-CoA = N-acetyl-alpha-D-glucosamine 1-phosphate + CoA + H(+). It carries out the reaction N-acetyl-alpha-D-glucosamine 1-phosphate + UTP + H(+) = UDP-N-acetyl-alpha-D-glucosamine + diphosphate. The protein operates within nucleotide-sugar biosynthesis; UDP-N-acetyl-alpha-D-glucosamine biosynthesis; N-acetyl-alpha-D-glucosamine 1-phosphate from alpha-D-glucosamine 6-phosphate (route II): step 2/2. Its pathway is nucleotide-sugar biosynthesis; UDP-N-acetyl-alpha-D-glucosamine biosynthesis; UDP-N-acetyl-alpha-D-glucosamine from N-acetyl-alpha-D-glucosamine 1-phosphate: step 1/1. It functions in the pathway bacterial outer membrane biogenesis; LPS lipid A biosynthesis. Catalyzes the last two sequential reactions in the de novo biosynthetic pathway for UDP-N-acetylglucosamine (UDP-GlcNAc). The C-terminal domain catalyzes the transfer of acetyl group from acetyl coenzyme A to glucosamine-1-phosphate (GlcN-1-P) to produce N-acetylglucosamine-1-phosphate (GlcNAc-1-P), which is converted into UDP-GlcNAc by the transfer of uridine 5-monophosphate (from uridine 5-triphosphate), a reaction catalyzed by the N-terminal domain. In Synechococcus sp. (strain JA-2-3B'a(2-13)) (Cyanobacteria bacterium Yellowstone B-Prime), this protein is Bifunctional protein GlmU.